The sequence spans 263 residues: uncharacterized protein (263 aa).

Transmembrane regions (helical) follow at residues 53-73 (FWII…LVKI), 103-123 (GFLF…LPGL), 130-150 (IILP…VFSY), 153-173 (LIPA…EPLW), 181-201 (FILV…IQIL), 213-233 (MLAA…ILTP), and 241-261 (LLLS…LFLI).

The protein belongs to the TatC family.

The protein resides in the plastid. The protein localises to the chloroplast membrane. This is an uncharacterized protein from Trieres chinensis (Marine centric diatom).